The chain runs to 22 residues: Alpha-amylase inhibitor DR4 (22 aa).

A disordered region spans residues 1–22 (SGGGKEAAETFNRVESHPRPDA).

Functionally, inhibits insect alpha-amylases. This chain is Alpha-amylase inhibitor DR4, found in Delonix regia (Royal poinciana).